Consider the following 181-residue polypeptide: Protein GrpE (181 aa).

Belongs to the GrpE family. As to quaternary structure, homodimer.

The protein localises to the cytoplasm. Its function is as follows. Participates actively in the response to hyperosmotic and heat shock by preventing the aggregation of stress-denatured proteins, in association with DnaK and GrpE. It is the nucleotide exchange factor for DnaK and may function as a thermosensor. Unfolded proteins bind initially to DnaJ; upon interaction with the DnaJ-bound protein, DnaK hydrolyzes its bound ATP, resulting in the formation of a stable complex. GrpE releases ADP from DnaK; ATP binding to DnaK triggers the release of the substrate protein, thus completing the reaction cycle. Several rounds of ATP-dependent interactions between DnaJ, DnaK and GrpE are required for fully efficient folding. This is Protein GrpE from Verminephrobacter eiseniae (strain EF01-2).